A 403-amino-acid polypeptide reads, in one-letter code: Acetate kinase (403 aa).

N7 contributes to the Mg(2+) binding site. K14 is a binding site for ATP. Position 95 (R95) interacts with substrate. Residue D152 is the Proton donor/acceptor of the active site. Residues 212–216, 286–288, and 335–339 contribute to the ATP site; these read HLGNG, DMR, and GIGEN. E389 provides a ligand contact to Mg(2+).

This sequence belongs to the acetokinase family. Homodimer. Mg(2+) is required as a cofactor. Mn(2+) serves as cofactor.

It localises to the cytoplasm. The enzyme catalyses acetate + ATP = acetyl phosphate + ADP. It participates in metabolic intermediate biosynthesis; acetyl-CoA biosynthesis; acetyl-CoA from acetate: step 1/2. In terms of biological role, catalyzes the formation of acetyl phosphate from acetate and ATP. Can also catalyze the reverse reaction. In Desulfovibrio desulfuricans (strain ATCC 27774 / DSM 6949 / MB), this protein is Acetate kinase.